Reading from the N-terminus, the 147-residue chain is Phosphoribosyl-AMP cyclohydrolase (147 aa).

D97 is a Mg(2+) binding site. A Zn(2+)-binding site is contributed by C98. Residues D99 and D101 each contribute to the Mg(2+) site. C114 and C121 together coordinate Zn(2+).

It belongs to the PRA-CH family. As to quaternary structure, homodimer. Mg(2+) is required as a cofactor. It depends on Zn(2+) as a cofactor.

It is found in the cytoplasm. The enzyme catalyses 1-(5-phospho-beta-D-ribosyl)-5'-AMP + H2O = 1-(5-phospho-beta-D-ribosyl)-5-[(5-phospho-beta-D-ribosylamino)methylideneamino]imidazole-4-carboxamide. Its pathway is amino-acid biosynthesis; L-histidine biosynthesis; L-histidine from 5-phospho-alpha-D-ribose 1-diphosphate: step 3/9. Its function is as follows. Catalyzes the hydrolysis of the adenine ring of phosphoribosyl-AMP. In Hydrogenovibrio crunogenus (strain DSM 25203 / XCL-2) (Thiomicrospira crunogena), this protein is Phosphoribosyl-AMP cyclohydrolase.